The chain runs to 291 residues: Beta-lactamase CTX-M-97 (291 aa).

Positions 1-28 (MMTQSIGRSMLTVMATLPLLFSSATLHA) are cleaved as a signal peptide. Ser-73 functions as the Acyl-ester intermediate in the catalytic mechanism. 237-239 (KTG) contacts substrate.

The protein belongs to the class-A beta-lactamase family.

It carries out the reaction a beta-lactam + H2O = a substituted beta-amino acid. Functionally, is probably capable of hydrolyzing cephalosporins such as ceftriaxone and ceftazidime, thus conferring resistance to these antibiotics. In Escherichia coli, this protein is Beta-lactamase CTX-M-97 (bla).